Reading from the N-terminus, the 250-residue chain is Gamma-secretase subunit APH1-like (250 aa).

The next 7 membrane-spanning stretches (helical) occupy residues 5 to 25 (AGIG…VSVI), 29 to 49 (PFLI…LIIL), 57 to 77 (LPLK…SVCF), 116 to 136 (IALA…CLSL), 157 to 177 (FLIS…SMVI), 191 to 211 (IIVP…FASE), and 212 to 232 (GCVI…VHCG).

Belongs to the APH-1 family. As to quaternary structure, probable component of the gamma-secretase complex, a complex composed of a presenilin homodimer, nicastrin, APH1 and PEN2.

It localises to the membrane. Probable subunit of the gamma-secretase complex, an endoprotease complex that catalyzes the intramembrane cleavage of integral proteins such as Notch receptors. The chain is Gamma-secretase subunit APH1-like from Arabidopsis thaliana (Mouse-ear cress).